We begin with the raw amino-acid sequence, 451 residues long: MVVVAILAAGRGTRMKSDLPKVLHSLGGRSLVERVIDSVEPLSPSRRLVIVGYQAEQVKTGLQSPNLEFVEQTVQLGTGHAIQQLLPHLEGYRGDLLVLNGDVPLLRTQTLEQLLQTHQTNQNAATILTSHLPNPKGYGRVFCNGNNIVQQIVEDKDCSPAQRQNHRINAGIYCFRWENLAQVLPHLEANNAQKEYYLTDAVTQVGQVMAVDVEDYQEILGINDRLQLATAYEILQRRVKEQWMMAGVTLIDPNSITIDDTVELQPDVIIEPQTHLRGSTVIQSGSRIGPGSLIENSQLGANVTVHYSVVTDSTIQDGTKIGPYAHLRGHAQVGANCRIGNFVELKNTELGDRTNVAHLSYLGDATAGTQVNIGAGTITANYDGVKKHRTKIGDRTKTGSNSVLVAPVTLGDDVYVAAGSTVTEDVPNDSLVIARTRQVIKLGWRRKSGES.

The interval 1–225 (MVVVAILAAG…YQEILGINDR (225 aa)) is pyrophosphorylase. UDP-N-acetyl-alpha-D-glucosamine is bound by residues 7 to 10 (LAAG), Lys-21, Gln-72, and 77 to 78 (GT). Residue Asp-102 participates in Mg(2+) binding. Positions 139, 154, 169, and 223 each coordinate UDP-N-acetyl-alpha-D-glucosamine. Asn-223 contributes to the Mg(2+) binding site. Positions 226-246 (LQLATAYEILQRRVKEQWMMA) are linker. Positions 247-451 (GVTLIDPNSI…LGWRRKSGES (205 aa)) are N-acetyltransferase. Arg-328 and Lys-346 together coordinate UDP-N-acetyl-alpha-D-glucosamine. The active-site Proton acceptor is His-358. UDP-N-acetyl-alpha-D-glucosamine contacts are provided by Tyr-361 and Asn-372. Acetyl-CoA is bound by residues Ala-375, 381–382 (NY), Ser-400, Ala-418, and Arg-435.

It in the N-terminal section; belongs to the N-acetylglucosamine-1-phosphate uridyltransferase family. In the C-terminal section; belongs to the transferase hexapeptide repeat family. In terms of assembly, homotrimer. It depends on Mg(2+) as a cofactor.

It is found in the cytoplasm. The catalysed reaction is alpha-D-glucosamine 1-phosphate + acetyl-CoA = N-acetyl-alpha-D-glucosamine 1-phosphate + CoA + H(+). It catalyses the reaction N-acetyl-alpha-D-glucosamine 1-phosphate + UTP + H(+) = UDP-N-acetyl-alpha-D-glucosamine + diphosphate. The protein operates within nucleotide-sugar biosynthesis; UDP-N-acetyl-alpha-D-glucosamine biosynthesis; N-acetyl-alpha-D-glucosamine 1-phosphate from alpha-D-glucosamine 6-phosphate (route II): step 2/2. It participates in nucleotide-sugar biosynthesis; UDP-N-acetyl-alpha-D-glucosamine biosynthesis; UDP-N-acetyl-alpha-D-glucosamine from N-acetyl-alpha-D-glucosamine 1-phosphate: step 1/1. It functions in the pathway bacterial outer membrane biogenesis; LPS lipid A biosynthesis. Functionally, catalyzes the last two sequential reactions in the de novo biosynthetic pathway for UDP-N-acetylglucosamine (UDP-GlcNAc). The C-terminal domain catalyzes the transfer of acetyl group from acetyl coenzyme A to glucosamine-1-phosphate (GlcN-1-P) to produce N-acetylglucosamine-1-phosphate (GlcNAc-1-P), which is converted into UDP-GlcNAc by the transfer of uridine 5-monophosphate (from uridine 5-triphosphate), a reaction catalyzed by the N-terminal domain. The chain is Bifunctional protein GlmU from Nostoc sp. (strain PCC 7120 / SAG 25.82 / UTEX 2576).